The primary structure comprises 211 residues: Small ribosomal subunit protein uS3 (211 aa).

The region spanning 38-106 (LRNFLKKRLY…EIYLNIQEVR (69 aa)) is the KH type-2 domain.

This sequence belongs to the universal ribosomal protein uS3 family. As to quaternary structure, part of the 30S ribosomal subunit. Forms a tight complex with proteins S10 and S14.

Its function is as follows. Binds the lower part of the 30S subunit head. Binds mRNA in the 70S ribosome, positioning it for translation. This chain is Small ribosomal subunit protein uS3, found in Geobacter sulfurreducens (strain ATCC 51573 / DSM 12127 / PCA).